A 92-amino-acid chain; its full sequence is UPF0250 protein Avin_08440 (92 aa).

It belongs to the UPF0250 family.

The protein is UPF0250 protein Avin_08440 of Azotobacter vinelandii (strain DJ / ATCC BAA-1303).